A 119-amino-acid chain; its full sequence is Hydrogenase maturation factor HypA (119 aa).

Histidine 2 is a binding site for Ni(2+). Residues cysteine 73, cysteine 76, cysteine 90, and cysteine 93 each coordinate Zn(2+).

It belongs to the HypA/HybF family.

Involved in the maturation of [NiFe] hydrogenases. Required for nickel insertion into the metal center of the hydrogenase. The polypeptide is Hydrogenase maturation factor HypA (Wolinella succinogenes (strain ATCC 29543 / DSM 1740 / CCUG 13145 / JCM 31913 / LMG 7466 / NCTC 11488 / FDC 602W) (Vibrio succinogenes)).